Reading from the N-terminus, the 438-residue chain is Anaerobic glycerol-3-phosphate dehydrogenase subunit B (438 aa).

Belongs to the anaerobic G-3-P dehydrogenase subunit B family. As to quaternary structure, composed of a catalytic GlpA/B dimer and of membrane bound GlpC. FMN is required as a cofactor.

It catalyses the reaction a quinone + sn-glycerol 3-phosphate = dihydroxyacetone phosphate + a quinol. The protein operates within polyol metabolism; glycerol degradation via glycerol kinase pathway; glycerone phosphate from sn-glycerol 3-phosphate (anaerobic route): step 1/1. Its function is as follows. Conversion of glycerol 3-phosphate to dihydroxyacetone. Uses fumarate or nitrate as electron acceptor. This is Anaerobic glycerol-3-phosphate dehydrogenase subunit B from Vibrio vulnificus (strain YJ016).